The chain runs to 323 residues: Ubiquinone biosynthesis protein COQ4, mitochondrial (323 aa).

The Zn(2+) site is built by H209, D210, H213, and E225.

Belongs to the COQ4 family. As to quaternary structure, component of a multi-subunit COQ enzyme complex, composed of at least COQ3, COQ4, COQ5, COQ6, COQ7 and COQ9. Requires Zn(2+) as cofactor.

Its subcellular location is the mitochondrion inner membrane. The enzyme catalyses a 4-hydroxy-3-methoxy-5-(all-trans-polyprenyl)benzoate + H(+) = a 2-methoxy-6-(all-trans-polyprenyl)phenol + CO2. It participates in cofactor biosynthesis; ubiquinone biosynthesis. Its function is as follows. Lyase that catalyzes the C1-decarboxylation of 4-hydroxy-3-methoxy-5-(all-trans-polyprenyl)benzoic acid into 2-methoxy-6-(all-trans-polyprenyl)phenol during ubiquinone biosynthesis. The protein is Ubiquinone biosynthesis protein COQ4, mitochondrial of Debaryomyces hansenii (strain ATCC 36239 / CBS 767 / BCRC 21394 / JCM 1990 / NBRC 0083 / IGC 2968) (Yeast).